Here is a 905-residue protein sequence, read N- to C-terminus: Stonin-2 (905 aa).

Disordered stretches follow at residues 1–121 (MTTL…HQET), 178–205 (EQTS…VEME), and 244–263 (LPPV…SVIP). Over residues 40-50 (SSSPDQSESSS) the composition is skewed to low complexity. The span at 60–73 (SQDHSHSEQDDSSE) shows a compositional bias: basic and acidic residues. The span at 85–94 (PGSPEQPPPD) shows a compositional bias: pro residues. The span at 178–196 (EQTSGQASGADSTDNSSSL) shows a compositional bias: polar residues. The span at 244–256 (LPPVTSPLKPNTP) shows a compositional bias: pro residues. Phosphothreonine is present on T255. 3 positions are modified to phosphoserine: S281, S287, and S302. Short sequence motifs (NPF) lie at residues 313-315 (NPF) and 329-331 (NPF). In terms of domain architecture, SHD spans 427 to 560 (GWPMMLRIPE…DLPVLSMDLS (134 aa)). One can recognise an MHD domain in the interval 568-878 (EEEITVDVRD…SYQVALGSIW (311 aa)). S762 bears the Phosphoserine mark.

Belongs to the Stoned B family. As to quaternary structure, interacts with the second C2 domain of synaptotagmins SYT1 and SYT2. Interacts with EPS15, EPS15R and ITSN1. Interacts indirectly with the AP-2 adapter complex. Interacts with TOR1A and COPS4; the interaction controls STON2 protein stability. Post-translationally, phosphorylated in vitro by PKD. Neddylated; deneddylated via its interaction with the COP9 signalosome (CSN) complex through TOR1A and COPS4. In terms of processing, ubiquitinated; leading to its degradation. Ubiquitous.

It localises to the cytoplasm. Its subcellular location is the membrane. The protein localises to the synapse. It is found in the synaptosome. Adapter protein involved in endocytic machinery. Involved in the synaptic vesicle recycling. May facilitate clathrin-coated vesicle uncoating. The chain is Stonin-2 (STON2) from Homo sapiens (Human).